The primary structure comprises 107 residues: MAEFSFSDLEAIIRDRAHSGDPDSWTAKLFARGIDKAAQKLGEEAVETAIAAVKGDRQGLVSESADLIYHWLVVLGLSGVPLSDVLKELESRTGRSGIAEKASRPKG.

The protein belongs to the PRA-PH family.

Its subcellular location is the cytoplasm. The catalysed reaction is 1-(5-phospho-beta-D-ribosyl)-ATP + H2O = 1-(5-phospho-beta-D-ribosyl)-5'-AMP + diphosphate + H(+). It participates in amino-acid biosynthesis; L-histidine biosynthesis; L-histidine from 5-phospho-alpha-D-ribose 1-diphosphate: step 2/9. This is Phosphoribosyl-ATP pyrophosphatase (hisE) from Mesorhizobium japonicum (strain LMG 29417 / CECT 9101 / MAFF 303099) (Mesorhizobium loti (strain MAFF 303099)).